The primary structure comprises 71 residues: Small ribosomal subunit protein bS21 (71 aa).

Residues 48–60 show a composition bias toward basic residues; that stretch reads KKAAAVKRYKKKL. The segment at 48–71 is disordered; sequence KKAAAVKRYKKKLQRESIRTTRMY. Over residues 61–71 the composition is skewed to basic and acidic residues; it reads QRESIRTTRMY.

Belongs to the bacterial ribosomal protein bS21 family.

This chain is Small ribosomal subunit protein bS21, found in Psychrobacter sp. (strain PRwf-1).